The following is a 343-amino-acid chain: Olfactory receptor 1E3 (343 aa).

Residues 1–28 (MMKKNQTMISEFLLLGLPIQPEQQNLFY) lie on the Extracellular side of the membrane. A glycan (N-linked (GlcNAc...) asparagine) is linked at Asn5. Residues 29–49 (ALFLAVYLTTLLGNLLVIVLI) traverse the membrane as a helical segment. Residues 50-107 (RLDSHLHMPMYLCLSNLSFSDLCFSSVTMPKLLQNMQSQNPSIPFADCLAQMYFHLFY) are Cytoplasmic-facing. An intrachain disulfide couples Cys97 to Cys179. A helical membrane pass occupies residues 108 to 128 (GVLESFLLVVMAYHCYVAICF). Residues 129–141 (PLHYTTIMSPKCC) are Extracellular-facing. Residues 142 to 162 (LGLLTLSWLLTTAHATLHTLL) form a helical membrane-spanning segment. Topologically, residues 163-195 (MARLSFCAENVIPHFFCDTSTLLKLACSNTQVN) are cytoplasmic. A helical transmembrane segment spans residues 196-216 (GWVMFFMGGLILVIPFLLLIM). The Extracellular segment spans residues 217 to 242 (SCARIVSTILRVPSTGGIQKAFSTCG). A helical membrane pass occupies residues 243-263 (PHLSVVSLFYGTIIGLYLCPL). Residues 264-271 (TNHNTVKD) are Cytoplasmic-facing. The helical transmembrane segment at 272-292 (TVMAVMYTGVTHMLNPFIYSL) threads the bilayer. The Extracellular portion of the chain corresponds to 293 to 310 (RNRDMRGNPGQSLQHKEN). A helical transmembrane segment spans residues 311 to 331 (FFVFKIVIVGILPLLNLVGVV). Residues 332–343 (KLIMKYHSKSVA) lie on the Cytoplasmic side of the membrane.

The protein belongs to the G-protein coupled receptor 1 family.

It localises to the cell membrane. Its function is as follows. Odorant receptor. This is Olfactory receptor 1E3 (OR1E3) from Homo sapiens (Human).